The sequence spans 678 residues: NADPH--cytochrome P450 reductase (678 aa).

At Gly-2 the chain carries N-acetylglycine. Over 2 to 22 (GDSHEDTSATMPEAVAEEVSL) the chain is Lumenal. The chain crosses the membrane as a helical span at residues 23–43 (FSTTDMVLFSLIVGVLTYWFI). Topologically, residues 44-678 (FRKKKEEIPE…KGRYSLDVWS (635 aa)) are cytoplasmic. Positions 80–224 (IIVFYGSQTG…DFITWREQFW (145 aa)) constitute a Flavodoxin-like domain. Residues 86–91 (SQTGTA), 138–141 (ATYG), 173–182 (LGNKTYEHFN), and Asp-208 each bind FMN. One can recognise an FAD-binding FR-type domain in the interval 279–521 (KNPFLAAVTA…FVRKSQFRLP (243 aa)). Position 298 (Arg-298) interacts with NADP(+). FAD is bound by residues Arg-424, 454 to 457 (RYYS), 472 to 474 (CAV), Tyr-478, and 488 to 491 (GVAT). NADP(+)-binding positions include Thr-535, 596–597 (SR), 602–606 (KVYVQ), and Asp-639. Position 677 (Trp-677) interacts with FAD.

This sequence belongs to the NADPH--cytochrome P450 reductase family. It in the N-terminal section; belongs to the flavodoxin family. The protein in the C-terminal section; belongs to the flavoprotein pyridine nucleotide cytochrome reductase family. Requires FAD as cofactor. FMN is required as a cofactor.

It is found in the endoplasmic reticulum membrane. It carries out the reaction 2 oxidized [cytochrome P450] + NADPH = 2 reduced [cytochrome P450] + NADP(+) + H(+). This enzyme is required for electron transfer from NADP to cytochrome P450 in microsomes. It can also provide electron transfer to heme oxygenase and cytochrome B5. This chain is NADPH--cytochrome P450 reductase, found in Rattus norvegicus (Rat).